Here is a 313-residue protein sequence, read N- to C-terminus: Adhesin MafA 1 (313 aa).

The first 14 residues, 1 to 14 (MKILLLLIPLVLTA), serve as a signal peptide directing secretion. C15 carries N-palmitoyl cysteine lipidation. A lipid anchor (S-diacylglycerol cysteine) is attached at C15. The segment covering 282–298 (GDTTAQNRPDFKQNNGK) has biased composition (polar residues). The segment at 282-313 (GDTTAQNRPDFKQNNGKNPDVGNEVIRRRKGG) is disordered.

Belongs to the MafA family.

The protein resides in the cell outer membrane. The sequence is that of Adhesin MafA 1 (mafA1) from Neisseria meningitidis serogroup C / serotype 2a (strain ATCC 700532 / DSM 15464 / FAM18).